The sequence spans 182 residues: MYSSRILKYEGRSKFGSSCARILRAKSEIPAVVYGKESDVLHIKINSNEFDKKFAKFTDNTVLLLNDGMVEKCVFIKDVSENLTKKFIYHIDFYEVDRTREIERDISIKFIGASVGVKEGGTLSVLRNTVKVKALPLNLPEFVEVDLTPVKKGDQITLKDIVLSDNVKLSETDENLAVLFVK.

The protein belongs to the bacterial ribosomal protein bL25 family. CTC subfamily. As to quaternary structure, part of the 50S ribosomal subunit; part of the 5S rRNA/L5/L18/L25 subcomplex. Contacts the 5S rRNA. Binds to the 5S rRNA independently of L5 and L18.

This is one of the proteins that binds to the 5S RNA in the ribosome where it forms part of the central protuberance. The chain is Large ribosomal subunit protein bL25 from Borrelia duttonii (strain Ly).